The sequence spans 254 residues: Small ribosomal subunit protein mS40 (254 aa).

The N-terminal 33 residues, 1 to 33, are a transit peptide targeting the mitochondrion; that stretch reads MAAPLRHTLLKLVPTLLRSSYVAQVPLQTLCTR. The residue at position 47 (Ser-47) is a Phosphoserine. Residues 218–254 form a disordered region; sequence YQGNLLEESGPPPESMPEMPTTPPAESSIEQPGSQSA. Positions 227-240 are enriched in pro residues; that stretch reads GPPPESMPEMPTTP.

Belongs to the bacterial ribosomal protein bS18 family. Mitochondrion-specific ribosomal protein mS40 subfamily. Component of the mitochondrial ribosome small subunit (28S) which comprises a 12S rRNA and about 30 distinct proteins.

Its subcellular location is the mitochondrion. The sequence is that of Small ribosomal subunit protein mS40 (Mrps18b) from Mus musculus (Mouse).